Consider the following 512-residue polypeptide: Maturase K (512 aa).

The protein belongs to the intron maturase 2 family. MatK subfamily.

The protein resides in the plastid. It localises to the chloroplast. Functionally, usually encoded in the trnK tRNA gene intron. Probably assists in splicing its own and other chloroplast group II introns. In Lilium canadense (Canada lily), this protein is Maturase K.